Here is a 629-residue protein sequence, read N- to C-terminus: Microtubule-associated protein 70-3 (629 aa).

Residues 1–54 (MEEGGYAFEVNNGRPTASEFGTTARISSPSLTMSSSFREGGGGGGSKGLTRRRS) form a disordered region. Residues 13–33 (GRPTASEFGTTARISSPSLTM) are compositionally biased toward polar residues. The stretch at 75-375 (VKVELNRLEN…ADRAAKSEAQ (301 aa)) forms a coiled coil. Positions 257-493 (ILDKLHRQKV…FPLNQSSEGT (237 aa)) are required for targeting to microtubules. Disordered regions lie at residues 391-421 (LRGP…LGGA), 458-519 (GTSR…DSVP), and 578-629 (AMEK…RSTQ). Positions 393-416 (GPSSSGNRSTPEGRSMSNGPSRRQ) are enriched in polar residues. Residues 544-592 (LRDKDEAIEMLAKKVETLTKAMEVEAKKMRREVAAMEKEVSAMRVDNKG) adopt a coiled-coil conformation. A compositionally biased stretch (basic and acidic residues) spans 578 to 596 (AMEKEVSAMRVDNKGSDSR). Residues 603-613 (NSKGASTTAQL) show a composition bias toward polar residues.

The protein belongs to the MAP70 family.

Its subcellular location is the cytoplasm. It localises to the cytoskeleton. Its function is as follows. Plant-specific protein that interact with microtubules. This Arabidopsis thaliana (Mouse-ear cress) protein is Microtubule-associated protein 70-3 (MAP70.3).